The primary structure comprises 326 residues: Protein FAM110C (326 aa).

Disordered regions lie at residues 1-37, 51-80, and 201-221; these read MRAL…KSAV, TLGS…PSTL, and VELR…LSSR. Positions 209–221 are enriched in polar residues; it reads KGLQRSQSDLSSR. Ser-255 bears the Phosphoserine mark.

This sequence belongs to the FAM110 family. As to quaternary structure, interacts with AKT1; the interaction is transient and follows AKT1 activation. Interacts with PPP2CA and alpha-tubulin.

Its subcellular location is the cytoplasm. The protein localises to the cytoskeleton. It is found in the microtubule organizing center. It localises to the centrosome. The protein resides in the spindle pole. Its subcellular location is the nucleus. May play a role in microtubule organization. May play a role in cell spreading and cell migration of epithelial cells; the function may involve the AKT1 signaling pathway. This chain is Protein FAM110C (Fam110c), found in Rattus norvegicus (Rat).